The following is a 304-amino-acid chain: tRNA dimethylallyltransferase (304 aa).

Position 13–20 (13–20 (GPTAAGKT)) interacts with ATP. 15-20 (TAAGKT) provides a ligand contact to substrate. An interaction with substrate tRNA region spans residues 38 to 41 (DSRQ).

Belongs to the IPP transferase family. In terms of assembly, monomer. Requires Mg(2+) as cofactor.

It carries out the reaction adenosine(37) in tRNA + dimethylallyl diphosphate = N(6)-dimethylallyladenosine(37) in tRNA + diphosphate. Catalyzes the transfer of a dimethylallyl group onto the adenine at position 37 in tRNAs that read codons beginning with uridine, leading to the formation of N6-(dimethylallyl)adenosine (i(6)A). This Cytophaga hutchinsonii (strain ATCC 33406 / DSM 1761 / CIP 103989 / NBRC 15051 / NCIMB 9469 / D465) protein is tRNA dimethylallyltransferase.